Here is a 449-residue protein sequence, read N- to C-terminus: Tubulin beta chain (449 aa).

8 residues coordinate GTP: glutamine 11, glutamate 69, serine 138, glycine 142, threonine 143, glycine 144, asparagine 204, and asparagine 226. Glutamate 69 contributes to the Mg(2+) binding site. A disordered region spans residues 426–449 (QDATAEEEGEFDEEEGVMDAEGAA). Acidic residues predominate over residues 429–443 (TAEEEGEFDEEEGVM).

This sequence belongs to the tubulin family. As to quaternary structure, dimer of alpha and beta chains. A typical microtubule is a hollow water-filled tube with an outer diameter of 25 nm and an inner diameter of 15 nM. Alpha-beta heterodimers associate head-to-tail to form protofilaments running lengthwise along the microtubule wall with the beta-tubulin subunit facing the microtubule plus end conferring a structural polarity. Microtubules usually have 13 protofilaments but different protofilament numbers can be found in some organisms and specialized cells. The cofactor is Mg(2+).

Its subcellular location is the cytoplasm. The protein resides in the cytoskeleton. Tubulin is the major constituent of microtubules, a cylinder consisting of laterally associated linear protofilaments composed of alpha- and beta-tubulin heterodimers. Microtubules grow by the addition of GTP-tubulin dimers to the microtubule end, where a stabilizing cap forms. Below the cap, tubulin dimers are in GDP-bound state, owing to GTPase activity of alpha-tubulin. In Eimeria tenella (Coccidian parasite), this protein is Tubulin beta chain.